Here is a 117-residue protein sequence, read N- to C-terminus: Immunoglobulin lambda variable 1-47 (117 aa).

Positions 1–19 (MAGFPLLLTLLTHCAGSWA) are cleaved as a signal peptide. The residue at position 20 (Gln-20) is a Pyrrolidone carboxylic acid. Positions 20–44 (QSVLTQPPSASGTPGQRVTISCSGS) are framework-1. Residues 20-117 (QSVLTQPPSA…CAAWDDSLSG (98 aa)) enclose the Ig-like domain. Cys-41 and Cys-108 form a disulfide bridge. The tract at residues 45–52 (SSNIGSNY) is complementarity-determining-1. Residues 53-69 (VYWYQQLPGTAPKLLIY) are framework-2. Positions 70-72 (SNN) are complementarity-determining-2. A framework-3 region spans residues 73 to 108 (QRPSGVPDRFSGSKSGTSASLAISGLRSEDEADYYC). Residues 109-117 (AAWDDSLSG) are complementarity-determining-3.

In terms of assembly, immunoglobulins are composed of two identical heavy chains and two identical light chains; disulfide-linked.

The protein resides in the secreted. Its subcellular location is the cell membrane. Functionally, v region of the variable domain of immunoglobulin light chains that participates in the antigen recognition. Immunoglobulins, also known as antibodies, are membrane-bound or secreted glycoproteins produced by B lymphocytes. In the recognition phase of humoral immunity, the membrane-bound immunoglobulins serve as receptors which, upon binding of a specific antigen, trigger the clonal expansion and differentiation of B lymphocytes into immunoglobulins-secreting plasma cells. Secreted immunoglobulins mediate the effector phase of humoral immunity, which results in the elimination of bound antigens. The antigen binding site is formed by the variable domain of one heavy chain, together with that of its associated light chain. Thus, each immunoglobulin has two antigen binding sites with remarkable affinity for a particular antigen. The variable domains are assembled by a process called V-(D)-J rearrangement and can then be subjected to somatic hypermutations which, after exposure to antigen and selection, allow affinity maturation for a particular antigen. The polypeptide is Immunoglobulin lambda variable 1-47 (Homo sapiens (Human)).